The sequence spans 178 residues: Large ribosomal subunit protein uL6 (178 aa).

The protein belongs to the universal ribosomal protein uL6 family. As to quaternary structure, part of the 50S ribosomal subunit.

Functionally, this protein binds to the 23S rRNA, and is important in its secondary structure. It is located near the subunit interface in the base of the L7/L12 stalk, and near the tRNA binding site of the peptidyltransferase center. The sequence is that of Large ribosomal subunit protein uL6 from Staphylococcus saprophyticus subsp. saprophyticus (strain ATCC 15305 / DSM 20229 / NCIMB 8711 / NCTC 7292 / S-41).